The chain runs to 818 residues: Elongation factor G, mitochondrial (818 aa).

A mitochondrion-targeting transit peptide spans 1–23; it reads MFLGRAASRTCRHSQPLRVAARA. The tract at residues 67-96 is disordered; it reads MASTATATKPTEEASSSDQPPAPAHKLTDN. Polar residues predominate over residues 69–85; sequence STATATKPTEEASSSDQ. A tr-type G domain is found at 102 to 390; that stretch reads TFQRNIGISA…GVCEYLPNPS (289 aa). Residues 111 to 118, 188 to 192, and 242 to 245 each bind GTP; these read AHIDSGKT, DTPGH, and NKMD.

This sequence belongs to the TRAFAC class translation factor GTPase superfamily. Classic translation factor GTPase family. EF-G/EF-2 subfamily.

Its subcellular location is the mitochondrion. It participates in protein biosynthesis; polypeptide chain elongation. Mitochondrial GTPase that catalyzes the GTP-dependent ribosomal translocation step during translation elongation. During this step, the ribosome changes from the pre-translocational (PRE) to the post-translocational (POST) state as the newly formed A-site-bound peptidyl-tRNA and P-site-bound deacylated tRNA move to the P and E sites, respectively. Catalyzes the coordinated movement of the two tRNA molecules, the mRNA and conformational changes in the ribosome. This is Elongation factor G, mitochondrial from Coprinopsis cinerea (strain Okayama-7 / 130 / ATCC MYA-4618 / FGSC 9003) (Inky cap fungus).